The primary structure comprises 380 residues: Acyl-coenzyme A diphosphatase NUDT19 (380 aa).

Residues tryptophan 8–tyrosine 264 enclose the Nudix hydrolase domain. Residues serine 115–glycine 136 carry the Nudix box motif. 2 residues coordinate Mg(2+): glutamate 130 and glutamate 134. The short motif at asparagine 378–leucine 380 is the Microbody targeting signal element.

Belongs to the Nudix hydrolase family. In terms of assembly, monomer. It depends on Mg(2+) as a cofactor. The cofactor is Mn(2+).

The protein resides in the peroxisome. The catalysed reaction is an acyl-CoA + H2O = an acyl-4'-phosphopantetheine + adenosine 3',5'-bisphosphate + 2 H(+). The enzyme catalyses CoA + H2O = (R)-4'-phosphopantetheine + adenosine 3',5'-bisphosphate + 2 H(+). It catalyses the reaction hexanoyl-CoA + H2O = hexanoyl-4'-phosphopantetheine + adenosine 3',5'-bisphosphate + 2 H(+). It carries out the reaction octanoyl-CoA + H2O = S-octanoyl-4'-phosphopantetheine + adenosine 3',5'-bisphosphate + 2 H(+). The catalysed reaction is butanoyl-CoA + H2O = S-butanoyl-4'-phosphopantetheine + adenosine 3',5'-bisphosphate + 2 H(+). The enzyme catalyses propanoyl-CoA + H2O = propanoyl-4'-phosphopantetheine + adenosine 3',5'-bisphosphate + 2 H(+). It catalyses the reaction malonyl-CoA + H2O = malonyl-4'-phosphopantetheine + adenosine 3',5'-bisphosphate + 2 H(+). It carries out the reaction succinyl-CoA + H2O = succinyl-4'-phosphopantetheine + adenosine 3',5'-bisphosphate + 2 H(+). The catalysed reaction is choloyl-CoA + H2O = S-choloyl-4'-phosphopantetheine + adenosine 3',5'-bisphosphate + 2 H(+). The enzyme catalyses 4,8-dimethylnonanoyl-CoA + H2O = S-(4,8-dimethylnonanoyl)-4'-phosphopantetheine + adenosine 3',5'-bisphosphate + 2 H(+). It catalyses the reaction (9Z,12Z,15Z)-octadecatrienoyl-CoA + H2O = S-(9Z,12Z,15Z-octadecatrienoyl)-4'-phosphopantetheine + adenosine 3',5'-bisphosphate + 2 H(+). It carries out the reaction (9Z,12Z)-octadecadienoyl-CoA + H2O = S-(9Z,12Z-octadecadienoyl)-4'-phosphopantetheine + adenosine 3',5'-bisphosphate + 2 H(+). The catalysed reaction is (9Z)-hexadecenoyl-CoA + H2O = S-(9Z-hexadecenoyl)-4'-phosphopantetheine + adenosine 3',5'-bisphosphate + 2 H(+). The enzyme catalyses (9Z)-tetradecenoyl-CoA + H2O = S-(9Z-tetradecenoyl)-4'-phosphopantetheine + adenosine 3',5'-bisphosphate + 2 H(+). It catalyses the reaction (6Z)-octenoyl-CoA + H2O = S-(6Z-octenoyl)-4'-phosphopantetheine + adenosine 3',5'-bisphosphate + 2 H(+). It carries out the reaction hexadecanoyl-CoA + H2O = S-hexadecanoyl-4'-phosphopantetheine + adenosine 3',5'-bisphosphate + 2 H(+). The catalysed reaction is tetradecanoyl-CoA + H2O = tetradecanoyl-4'-phosphopantetheine + adenosine 3',5'-bisphosphate + 2 H(+). The enzyme catalyses dodecanoyl-CoA + H2O = S-dodecanoyl-4'-phosphopantetheine + adenosine 3',5'-bisphosphate + 2 H(+). It catalyses the reaction a 5'-end CoA-ribonucleoside in mRNA + H2O = a 5'-end phospho-adenosine-phospho-ribonucleoside in mRNA + (R)-4'-phosphopantetheine + 2 H(+). Functionally, fatty acyl-coenzyme A (CoA) diphosphatase that hydrolyzes fatty acyl-CoA to yield acyl-4'-phosphopantetheine and adenosine 3',5'-bisphosphate. Mediates the hydrolysis of a wide range of CoA esters, including choloyl-CoA and branched-chain fatty-acyl-CoA esters and at low substrate concentrations medium and long-chain fatty-acyl-CoA esters are the primary substrates. Highest activity seen with medium-chain acyl-CoA esters and higher rates of activity seen with the unsaturated acyl-CoA esters compared with the saturated esters. Exhibits decapping activity towards dpCoA-capped RNAs in vitro. The protein is Acyl-coenzyme A diphosphatase NUDT19 (nudt19) of Xenopus laevis (African clawed frog).